We begin with the raw amino-acid sequence, 347 residues long: NADH-ubiquinone oxidoreductase chain 2 (347 aa).

11 helical membrane passes run 3 to 23 (PPILIIIMSTVMSGTMIVLTS), 25 to 45 (HWLLTWIGFEMNMLAIIPILM), 60 to 80 (FLTQATASMLLMMGIIINLMF), 96 to 116 (GLVTIALTMKLGMAPFHFWVP), 122 to 142 (ISLSSGMILLTWQKIAPLSVL), 153 to 173 (LLITMAIASVLIGGWGGLNQT), 178 to 198 (ILAYSSIAHMGWMTVILTYNP), 200 to 220 (LMVLNLTIYITMTLSTFMLFM), 237 to 257 (LPLMTSLILMLMMSLGGLPPL), 274 to 294 (DMIILPTFMAITALLNLYFYM), and 323 to 343 (IILLPPLIIISTMLLPMTPMM).

This sequence belongs to the complex I subunit 2 family. In terms of assembly, core subunit of respiratory chain NADH dehydrogenase (Complex I) which is composed of 45 different subunits. Interacts with TMEM242.

The protein resides in the mitochondrion inner membrane. It carries out the reaction a ubiquinone + NADH + 5 H(+)(in) = a ubiquinol + NAD(+) + 4 H(+)(out). Its function is as follows. Core subunit of the mitochondrial membrane respiratory chain NADH dehydrogenase (Complex I) which catalyzes electron transfer from NADH through the respiratory chain, using ubiquinone as an electron acceptor. Essential for the catalytic activity and assembly of complex I. This Phoca vitulina (Harbor seal) protein is NADH-ubiquinone oxidoreductase chain 2.